The sequence spans 767 residues: Probable NADP-dependent malic enzyme (767 aa).

The interval 1–430 (MDEMNKINYT…QLGSRLNPTA (430 aa)) is malic enzyme. Residue Tyr-42 is the Proton donor of the active site. The active-site Proton acceptor is the Lys-97. A divalent metal cation-binding residues include Glu-139, Asp-140, and Asp-165. Residues 198–201 (AGAA), Asn-290, and Asn-322 each bind NADP(+). The phosphate acetyltransferase stretch occupies residues 431–767 (NYMNFLAEKI…FACVEAIKEV (337 aa)).

It in the N-terminal section; belongs to the malic enzymes family. In the C-terminal section; belongs to the phosphate acetyltransferase and butyryltransferase family. Requires Mg(2+) as cofactor. It depends on Mn(2+) as a cofactor.

The enzyme catalyses (S)-malate + NADP(+) = pyruvate + CO2 + NADPH. It carries out the reaction oxaloacetate + H(+) = pyruvate + CO2. The polypeptide is Probable NADP-dependent malic enzyme (Rickettsia prowazekii (strain Madrid E)).